Here is a 390-residue protein sequence, read N- to C-terminus: MMNPVLWLQMTNMISYQGLVRTFLNKNDLKAFIAFPSSLYPDDPNWIPPLFIERNEHLSAKNPGTDHIIWQAWVAKKAGQIVGRITAQIDTLHRERYGKDTGHFGMIDAIDDPQVFAALFGAAEAWLKSQGASKISGPFSLNINQESGLLIEGFDTPPCAMMPHGKPWYAAHIEQLGYHKGIDLLAWWMQRTDLTFSPALKKLMDQVRKKVTIRCINRQRFAEEMQILREIFNSGWQHNWGFVPFTEHEFATMGDQLKYLVPDDMIYIAEIDSAPCAFIVGLPNINEAIADLNGSLFPFGWAKLLWRLKVSGVRTARVPLMGVRDEYQFSRIGPVIALLLIEALRDPFARRKIDALEMSWILETNTGMNNMLERIGAEPYKRYRLYEKQI.

The chain is Protein YghO (yghO) from Escherichia coli (strain K12).